A 419-amino-acid chain; its full sequence is Mitogen-activated protein kinase spm1 (419 aa).

The 292-residue stretch at 23-314 folds into the Protein kinase domain; that stretch reads YTVTKELGQG…VEEALEHPYL (292 aa). Residues 29-37 and Lys-52 contribute to the ATP site; that span reads LGQGAYGIV. Asp-149 (proton acceptor) is an active-site residue.

It belongs to the protein kinase superfamily. Ser/Thr protein kinase family. MAP kinase subfamily. The cofactor is Mg(2+). In terms of processing, phosphorylated by the MAP kinase kinase mkk1.

It carries out the reaction L-seryl-[protein] + ATP = O-phospho-L-seryl-[protein] + ADP + H(+). The enzyme catalyses L-threonyl-[protein] + ATP = O-phospho-L-threonyl-[protein] + ADP + H(+). Its function is as follows. Mitogen-activated protein kinase, part of the mkh1-mkk1-spm1 MAPK cascade that regulates vegetative growth, conidial formation, colony surface hydrophobicity, osmotic stress, cell wall integrity maintenance, carbon and nitrogen source utilization, chitin distribution, septa formation, and pathogenicity. This chain is Mitogen-activated protein kinase spm1, found in Cytospora mali (Apple Valsa canker fungus).